We begin with the raw amino-acid sequence, 450 residues long: UDP-N-acetylglucosamine--peptide N-acetylglucosaminyltransferase stabilizing protein GtfB (450 aa).

Belongs to the GtfB family. In terms of assembly, forms a heterotetramer with 2 subunits each of GtfA and GtfB. Part of the accessory SecA2/SecY2 protein translocation apparatus required to export cell wall protein GspB.

Its subcellular location is the cell membrane. The protein operates within protein modification; protein glycosylation. Its function is as follows. Required for polymorphic O-glycosylation of GspB, a serine-rich repeat cell wall protein encoded upstream in the same operon. A substrate-binding protein that is part of the accessory SecA2/SecY2 system specifically required to export GspB. The GtfA-GtfB complex adds GlcNAc from UDP-GlcNAc to GspB, attaching the first sugar residue. Upon coexpression in E.coli with GtfA glycosylates GspB constructs. Binds the GspB protein substrate; alone this subunit only recognizes partially glycosylated GspB, but is constrained by GtfA to also recognize unglycosylated protein. The enzyme probably modifies its tertiary conformation by opening and closing its intersubunit interfaces to accomodate the increasingly glycosylated substrate. This Streptococcus gordonii protein is UDP-N-acetylglucosamine--peptide N-acetylglucosaminyltransferase stabilizing protein GtfB.